A 366-amino-acid chain; its full sequence is Dual-specificity RNA methyltransferase RlmN (366 aa).

Residue glutamate 102 is the Proton acceptor of the active site. The Radical SAM core domain occupies 108–340 (DEGRNTLCVS…TTTRKTRGRD (233 aa)). A disulfide bridge links cysteine 115 with cysteine 345. Residues cysteine 122, cysteine 126, and cysteine 129 each coordinate [4Fe-4S] cluster. Residues 171-172 (GE), serine 203, 225-227 (SLH), and asparagine 302 each bind S-adenosyl-L-methionine. Cysteine 345 (S-methylcysteine intermediate) is an active-site residue.

This sequence belongs to the radical SAM superfamily. RlmN family. [4Fe-4S] cluster is required as a cofactor.

The protein localises to the cytoplasm. The enzyme catalyses adenosine(2503) in 23S rRNA + 2 reduced [2Fe-2S]-[ferredoxin] + 2 S-adenosyl-L-methionine = 2-methyladenosine(2503) in 23S rRNA + 5'-deoxyadenosine + L-methionine + 2 oxidized [2Fe-2S]-[ferredoxin] + S-adenosyl-L-homocysteine. The catalysed reaction is adenosine(37) in tRNA + 2 reduced [2Fe-2S]-[ferredoxin] + 2 S-adenosyl-L-methionine = 2-methyladenosine(37) in tRNA + 5'-deoxyadenosine + L-methionine + 2 oxidized [2Fe-2S]-[ferredoxin] + S-adenosyl-L-homocysteine. Specifically methylates position 2 of adenine 2503 in 23S rRNA and position 2 of adenine 37 in tRNAs. m2A2503 modification seems to play a crucial role in the proofreading step occurring at the peptidyl transferase center and thus would serve to optimize ribosomal fidelity. The protein is Dual-specificity RNA methyltransferase RlmN of Methylococcus capsulatus (strain ATCC 33009 / NCIMB 11132 / Bath).